Here is a 647-residue protein sequence, read N- to C-terminus: Sodium/nucleoside cotransporter 1 (647 aa).

At 1–79 (MEDNTPRQRD…VRRFCREHTQ (79 aa)) the chain is on the cytoplasmic side. A disordered region spans residues 34–58 (EGRAPGSDSSPAEVGGGWSKAGPEH). The helical transmembrane segment at 80-103 (LFRWICTGLLCTAFAAFLLIACLL) threads the bilayer. Topologically, residues 104 to 108 (DFQRA) are extracellular. A helical transmembrane segment spans residues 109 to 127 (LALFVLFCVVLFFLAHSLL). The Cytoplasmic portion of the chain corresponds to 128–146 (KRLLGPKLLRCVKPLRHPC). Residues 147–166 (LNLWFKRGLALAAFLGLVLW) traverse the membrane as a helical segment. Residues 167 to 177 (LVLDTAQRPEQ) lie on the Extracellular side of the membrane. The helical transmembrane segment at 178–194 (LVSFGGICVFILLLFAG) threads the bilayer. Residues 195–200 (SKHHRA) are Cytoplasmic-facing. Residues 201-221 (VSWRAVSWGLGLQFALGLFVI) form a helical membrane-spanning segment. At 222 to 260 (RTEPGFIAFQWLGDQIQIFLSYTEAGSSFVFGEALVKDV) the chain is on the extracellular side. A helical membrane pass occupies residues 261–282 (FAFQVLPIIVFFSCAMSVLYYV). The Cytoplasmic portion of the chain corresponds to 283-293 (GLMQWVILKIS). The helical transmembrane segment at 294–317 (WLMQATMGTTATETLSVAGNIFVS) threads the bilayer. Residues 318–336 (QTEAPLLIRPYLADMTLSE) lie on the Extracellular side of the membrane. The chain crosses the membrane as a helical span at residues 337–359 (IHVVMTGGYATIAGSLLGAYISF). Over 360–365 (GIDAAS) the chain is Cytoplasmic. The chain crosses the membrane as a helical span at residues 366–385 (LIAASVMAAPCALALSKLVY). Residues 386 to 422 (PEVEESKFKREEGVKLTYGDAQNLLEAASSGAAMSVR) are Extracellular-facing. A helical transmembrane segment spans residues 423 to 445 (VVTNIAANLIAFLAVLAFINAAL). Over 446 to 456 (SWLGDMVDVQG) the chain is Cytoplasmic. Residues 457-478 (LSFQLICSYVLRPVAFLMGVAW) traverse the membrane as a helical segment. Residues 479–533 (EDCPVVAELLGMKLFLNEFVAYQELSGYKQRRLAGAEEWVGSRKQWISVRAEILT) are Extracellular-facing. The helical transmembrane segment at 534–557 (TYALCGFANFSSIGIMLGGLTSMV) threads the bilayer. The Cytoplasmic segment spans residues 558–568 (PQRKGDFSQIV). A helical transmembrane segment spans residues 569–591 (LRALCTGACVSLVNACVAGILYV). Topologically, residues 592–647 (PRGAEVDCVSFLNTTLSSSSFEVYQCCRQFFQSTSLEFSPEALDNCCRFYNHTICV) are extracellular. Asparagine 604 and asparagine 642 each carry an N-linked (GlcNAc...) asparagine glycan.

This sequence belongs to the concentrative nucleoside transporter (CNT) (TC 2.A.41) family. In terms of processing, N-glycosylated. N-glycosylation is required for localization to the plasma membrane and the transporter activity.

It is found in the cell membrane. It localises to the apical cell membrane. It carries out the reaction uridine(out) + Na(+)(out) = uridine(in) + Na(+)(in). The catalysed reaction is thymidine(out) + Na(+)(out) = thymidine(in) + Na(+)(in). It catalyses the reaction cytidine(out) + Na(+)(out) = cytidine(in) + Na(+)(in). The enzyme catalyses adenosine(out) + Na(+)(out) = adenosine(in) + Na(+)(in). Due to its high apparent affinity but slow transport, adenosine could act as a negative regulator of pyrimidine transport under some conditions. In terms of biological role, sodium and pyrimidine nucleoside symporter of the plasma membrane that imports uridine, thymidine and cytidine into cells by coupling their transport to the transmembrane sodium electrochemical gradient. Also transports adenosine, an atypical substrate transported with high apparent affinity, but low maximum velocity. Therefore, exhibits the transport characteristics of the nucleoside transport system cit or N2 subtype (N2/cit). Involved in renal nucleoside (re)absorption. The chain is Sodium/nucleoside cotransporter 1 (SLC28A1) from Sus scrofa (Pig).